We begin with the raw amino-acid sequence, 118 residues long: Small ribosomal subunit protein uS13 (118 aa).

Residues 94-118 (SLPLRGQRTKTNARTRKGPRKPIKK) form a disordered region.

Belongs to the universal ribosomal protein uS13 family. Part of the 30S ribosomal subunit. Forms a loose heterodimer with protein S19. Forms two bridges to the 50S subunit in the 70S ribosome.

Located at the top of the head of the 30S subunit, it contacts several helices of the 16S rRNA. In the 70S ribosome it contacts the 23S rRNA (bridge B1a) and protein L5 of the 50S subunit (bridge B1b), connecting the 2 subunits; these bridges are implicated in subunit movement. Contacts the tRNAs in the A and P-sites. This is Small ribosomal subunit protein uS13 from Idiomarina loihiensis (strain ATCC BAA-735 / DSM 15497 / L2-TR).